We begin with the raw amino-acid sequence, 42 residues long: Photosystem I reaction center subunit IX (42 aa).

The helical transmembrane segment at 8–28 threads the bilayer; it reads YLSTAPVLLTIWLSFTAALVI.

It belongs to the PsaJ family.

The protein localises to the plastid. The protein resides in the chloroplast thylakoid membrane. In terms of biological role, may help in the organization of the PsaE and PsaF subunits. The chain is Photosystem I reaction center subunit IX from Guillardia theta (Cryptophyte).